The chain runs to 506 residues: Protein nucleotidyltransferase YdiU (506 aa).

ATP is bound by residues Gly-95, Gly-97, Arg-98, Lys-118, Asp-130, Gly-131, Arg-181, and Arg-188. The active-site Proton acceptor is Asp-257. Mg(2+) contacts are provided by Asn-258 and Asp-267. Asp-267 is an ATP binding site. The interval 487–506 is disordered; sequence KHYQDAPTPDQRVKQTFCGT.

It belongs to the SELO family. Mg(2+) serves as cofactor. The cofactor is Mn(2+).

It catalyses the reaction L-seryl-[protein] + ATP = 3-O-(5'-adenylyl)-L-seryl-[protein] + diphosphate. The catalysed reaction is L-threonyl-[protein] + ATP = 3-O-(5'-adenylyl)-L-threonyl-[protein] + diphosphate. The enzyme catalyses L-tyrosyl-[protein] + ATP = O-(5'-adenylyl)-L-tyrosyl-[protein] + diphosphate. It carries out the reaction L-histidyl-[protein] + UTP = N(tele)-(5'-uridylyl)-L-histidyl-[protein] + diphosphate. It catalyses the reaction L-seryl-[protein] + UTP = O-(5'-uridylyl)-L-seryl-[protein] + diphosphate. The catalysed reaction is L-tyrosyl-[protein] + UTP = O-(5'-uridylyl)-L-tyrosyl-[protein] + diphosphate. Its function is as follows. Nucleotidyltransferase involved in the post-translational modification of proteins. It can catalyze the addition of adenosine monophosphate (AMP) or uridine monophosphate (UMP) to a protein, resulting in modifications known as AMPylation and UMPylation. The chain is Protein nucleotidyltransferase YdiU from Shewanella denitrificans (strain OS217 / ATCC BAA-1090 / DSM 15013).